A 42-amino-acid chain; its full sequence is Cytochrome b6-f complex subunit 7 (42 aa).

A helical membrane pass occupies residues 19 to 37 (AVTCIFMTLFGLSLGFALL).

It belongs to the PetM family. In terms of assembly, the 4 large subunits of the cytochrome b6-f complex are cytochrome b6, subunit IV (17 kDa polypeptide, PetD), cytochrome f and the Rieske protein, while the 4 small subunits are PetG, PetL, PetM and PetN. The complex functions as a dimer.

The protein resides in the plastid. The protein localises to the chloroplast thylakoid membrane. In terms of biological role, component of the cytochrome b6-f complex, which mediates electron transfer between photosystem II (PSII) and photosystem I (PSI), cyclic electron flow around PSI, and state transitions. This chain is Cytochrome b6-f complex subunit 7, found in Thalassiosira pseudonana (Marine diatom).